The following is a 709-amino-acid chain: Polyribonucleotide nucleotidyltransferase (709 aa).

Asp491 and Asp497 together coordinate Mg(2+). Residues Pro557 to Ile617 enclose the KH domain. One can recognise an S1 motif domain in the interval Gly641–Glu709.

Belongs to the polyribonucleotide nucleotidyltransferase family. It depends on Mg(2+) as a cofactor.

It localises to the cytoplasm. It carries out the reaction RNA(n+1) + phosphate = RNA(n) + a ribonucleoside 5'-diphosphate. Its function is as follows. Involved in mRNA degradation. Catalyzes the phosphorolysis of single-stranded polyribonucleotides processively in the 3'- to 5'-direction. The protein is Polyribonucleotide nucleotidyltransferase of Helicobacter hepaticus (strain ATCC 51449 / 3B1).